We begin with the raw amino-acid sequence, 761 residues long: Spindle assembly abnormal protein 4 (761 aa).

Over residues 1-11 the composition is skewed to acidic residues; it reads MLPSENGDEDQ. The interval 1–109 is disordered; it reads MLPSENGDED…SNERREEDNV (109 aa). Residues 51–62 are compositionally biased toward polar residues; that stretch reads TPTNSAPSSART. Basic and acidic residues predominate over residues 90–106; it reads ESHDSGNRSESNERREE. Residues 129-156 are a coiled coil; sequence ETCSKVSEEATQLRAEADRITAQANFIN. A compositionally biased stretch (low complexity) spans 164 to 173; it reads TPSSYSSNIS. Disordered stretches follow at residues 164–228 and 252–280; these read TPSS…QARP and PRRQ…SEHV. Residues 210-223 show a composition bias toward polar residues; sequence QTLSSLASSGSLDT. Basic and acidic residues predominate over residues 265–280; the sequence is SQKENVPERKAPSEHV. Positions 326–464 form a coiled coil; sequence RKKQEEAYAK…EKDDREKEMF (139 aa). Residues 479 to 497 are compositionally biased toward low complexity; it reads ATGSAASSRLPSVSSLASS. Residues 479–510 are disordered; it reads ATGSAASSRLPSVSSLASSMKTGSTGKGRTVS.

It is found in the cytoplasm. Its subcellular location is the cytoskeleton. The protein resides in the microtubule organizing center. It localises to the centrosome. Required for centrosome duplication. Plays a central role in determining centrosome size. The protein is Spindle assembly abnormal protein 4 (sas-4) of Caenorhabditis briggsae.